The chain runs to 293 residues: HTH-type transcriptional regulator HdfR (293 aa).

In terms of domain architecture, HTH lysR-type spans 1–58; it reads MDTELLKTFLEVSRTRHFGRAAESLYLTQSAVSFRIRQLENQLGANLFTRHRNNIRLT. A DNA-binding region (H-T-H motif) is located at residues 18–37; sequence FGRAAESLYLTQSAVSFRIR.

It belongs to the LysR transcriptional regulatory family.

Negatively regulates the transcription of the flagellar master operon flhDC by binding to the upstream region of the operon. This is HTH-type transcriptional regulator HdfR from Yersinia enterocolitica serotype O:8 / biotype 1B (strain NCTC 13174 / 8081).